Reading from the N-terminus, the 232-residue chain is Urease accessory protein UreF (232 aa).

Belongs to the UreF family. As to quaternary structure, ureD, UreF and UreG form a complex that acts as a GTP-hydrolysis-dependent molecular chaperone, activating the urease apoprotein by helping to assemble the nickel containing metallocenter of UreC. The UreE protein probably delivers the nickel.

The protein localises to the cytoplasm. Required for maturation of urease via the functional incorporation of the urease nickel metallocenter. The polypeptide is Urease accessory protein UreF (Trichodesmium erythraeum (strain IMS101)).